The sequence spans 293 residues: Proline iminopeptidase (293 aa).

Residue Ser105 is the Nucleophile of the active site. The active site involves Asp244. Residue His271 is the Proton donor of the active site.

The protein belongs to the peptidase S33 family. As to quaternary structure, part of the tricorn proteolytic complex.

It carries out the reaction Release of N-terminal proline from a peptide.. Cleaves H-Pro-AMC as well as a wide spectrum of amino acid substrates and several peptide substrates without a proline at the N-terminus. Proteases F1, F2 and F3 degrade oligopeptides produced by Tricorn (themselves probably produced by the proteasome) yielding free amino acids. The chain is Proline iminopeptidase (pip) from Thermoplasma acidophilum (strain ATCC 25905 / DSM 1728 / JCM 9062 / NBRC 15155 / AMRC-C165).